The chain runs to 204 residues: MSALEELITKAKALQAEGHTPGQISDELGLSMETVTWLLTQQKGMEAPKDVHIDWAAVGSHGVLLNDMAMMMLKRFLYLEEGGDVRAIEDLPDTVVGIAPSGAPLATLIAAEEGLKLAVYLPAKHSRSEAPTGSLSGTFSAIAAQRCIIVDDVVTTGTTLSETIAFLRQHGATPVAVWSLFDKRGAREIDGVPVHSLFVISRLG.

It belongs to the purine/pyrimidine phosphoribosyltransferase family. GfcR subfamily.

This chain is Transcriptional regulator GfcR, found in Methanoculleus marisnigri (strain ATCC 35101 / DSM 1498 / JR1).